The following is a 482-amino-acid chain: Wax ester synthase/diacylglycerol acyltransferase 9 (482 aa).

The Cytoplasmic segment spans residues 1–195 (MEKKMKEEEE…FRLVLVVCST (195 aa)). Catalysis depends on His140, which acts as the Proton acceptor. A helical membrane pass occupies residues 196 to 216 (VRLIWNTLVDSFLCMATIFFL). Residues 217–328 (KDTDTPLKGK…AKGSKCRWGN (112 aa)) lie on the Lumenal side of the membrane. A helical membrane pass occupies residues 329-349 (YISVILFPFTIALQSDPLVYL). Residues 350-366 (SNVKSMIDRKKNSLITY) are Cytoplasmic-facing. Residues 367 to 387 (IIYTFSEFVIKAFGINVAVAF) traverse the membrane as a helical segment. The Lumenal portion of the chain corresponds to 388-482 (QRKIMLNTTM…LEKGLPNHVN (95 aa)). Residue Asn394 is glycosylated (N-linked (GlcNAc...) asparagine).

The protein in the N-terminal section; belongs to the long-chain O-acyltransferase family. Mostly expressed in stems and siliques.

It is found in the cell membrane. Its subcellular location is the endoplasmic reticulum membrane. The catalysed reaction is an acyl-CoA + a 1,2-diacyl-sn-glycerol = a triacyl-sn-glycerol + CoA. The enzyme catalyses a long chain fatty alcohol + a fatty acyl-CoA = a wax ester + CoA. It participates in glycerolipid metabolism; triacylglycerol biosynthesis. Its pathway is lipid metabolism. Bifunctional wax ester synthase/diacylglycerol acyltransferase. Involved in cuticular wax biosynthesis. The sequence is that of Wax ester synthase/diacylglycerol acyltransferase 9 from Arabidopsis thaliana (Mouse-ear cress).